Here is a 121-residue protein sequence, read N- to C-terminus: Small ribosomal subunit protein bS16m (121 aa).

Belongs to the bacterial ribosomal protein bS16 family. As to quaternary structure, component of the mitochondrial small ribosomal subunit (mt-SSU). Mature yeast 74S mitochondrial ribosomes consist of a small (37S) and a large (54S) subunit. The 37S small subunit contains a 15S ribosomal RNA (15S mt-rRNA) and 34 different proteins. The 54S large subunit contains a 21S rRNA (21S mt-rRNA) and 46 different proteins.

It is found in the mitochondrion. In terms of biological role, component of the mitochondrial ribosome (mitoribosome), a dedicated translation machinery responsible for the synthesis of mitochondrial genome-encoded proteins, including at least some of the essential transmembrane subunits of the mitochondrial respiratory chain. The mitoribosomes are attached to the mitochondrial inner membrane and translation products are cotranslationally integrated into the membrane. This chain is Small ribosomal subunit protein bS16m (MRPS16), found in Saccharomyces cerevisiae (strain ATCC 204508 / S288c) (Baker's yeast).